Reading from the N-terminus, the 641-residue chain is MGRRSTSSTKSGKFMNPTDQARKEARKRELKKNKKQRMMVRAAVLKMKDPKQIIRDMEKLDEMEFNPVQQPQLNEKVLKDKRKKLRETFERILRLYEKENPDIYKELRKLEVEYEQKRAQLSQYFDAVKNAQHVEVESIPLPDMPHAPSNILIQDIPLPGAQPPSILKKTSAYGPPARAVSILPLLGHGVPRLPPGRKPPGPPPGPPPPQVLQMYGRKVGFALDLPPRRRDEDMLYSPELAQRGHDDDMSSTSEDDGYPEDMDQDKHDDSTEDSDTDRSDAESDGDEFGHREDSERDNTEEKKSGLSVRFADMPGKSRKKKKNMKELTPLQAMMLRMAGQEIPEEGREVEEFSEEEDADDSDDSEAEKQSQKQHKDDGHSDSTAAASSQQQAPPQSAPASQIQAPPMPGPPPLGPPPAPPLRPPGPPTGLPPGPPPGAPPFLRPPGMPGIRGPLPRLLPPGPPPGRPPGPPPGPPPGLPPGPPPRGPPPRLPPPAPPGIPPPRPGMMRPPLVPPLGPAPPGLFPPAPLPNPGVLSAPPSLIQRPKADDASAATIEKKATATISAKPQITNPKAEVTRFVPTALRVRRENKGATAVPQRRSEDDSAVPVAKAAPRSGPSVAVSVQTKDDVYEAFMKEMEGLL.

Residues 1–11 (MGRRSTSSTKS) are compositionally biased toward polar residues. Residues 1 to 37 (MGRRSTSSTKSGKFMNPTDQARKEARKRELKKNKKQR) are disordered. The interval 1–45 (MGRRSTSSTKSGKFMNPTDQARKEARKRELKKNKKQRMMVRAAVL) is required for nuclear import. K13 carries the N6-acetyllysine modification. Positions 28–37 (RELKKNKKQR) are enriched in basic residues. Residues 75-133 (EKVLKDKRKKLRETFERILRLYEKENPDIYKELRKLEVEYEQKRAQLSQYFDAVKNAQH) are a coiled coil. S181 is subject to Phosphoserine. The tract at residues 188–213 (HGVPRLPPGRKPPGPPPGPPPPQVLQ) is disordered. R192 is subject to Omega-N-methylarginine. A compositionally biased stretch (pro residues) spans 192–210 (RLPPGRKPPGPPPGPPPPQ). Residues 217–221 (RKVGF) are interaction with PP1. Y236 carries the post-translational modification Phosphotyrosine. Positions 236-550 (YSPELAQRGH…IQRPKADDAS (315 aa)) are disordered. S237 is subject to Phosphoserine. Over residues 253–263 (SEDDGYPEDMD) the composition is skewed to acidic residues. A compositionally biased stretch (basic and acidic residues) spans 276–304 (TDRSDAESDGDEFGHREDSERDNTEEKKS). 2 positions are modified to phosphoserine: S279 and S283. The segment at 306–310 (LSVRF) is interaction with PP1. A compositionally biased stretch (acidic residues) spans 351–365 (EFSEEEDADDSDDSE). Residues S353, S361, and S364 each carry the phosphoserine modification. Residues 366–380 (AEKQSQKQHKDDGHS) are compositionally biased toward basic and acidic residues. Low complexity predominate over residues 381-404 (DSTAAASSQQQAPPQSAPASQIQA). Composition is skewed to pro residues over residues 405 to 447 (PPMP…PPGM), 456 to 504 (RLLP…PPRP), and 510 to 530 (PLVP…PLPN). Positions 455–466 (PRLLPPGPPPGR) match the PGR motif. K557 is covalently cross-linked (Glycyl lysine isopeptide (Lys-Gly) (interchain with G-Cter in SUMO2)). Residue K565 is modified to N6-acetyllysine. A Glycyl lysine isopeptide (Lys-Gly) (interchain with G-Cter in SUMO2) cross-link involves residue K572. The segment at 588 to 620 (ENKGATAVPQRRSEDDSAVPVAKAAPRSGPSVA) is disordered. The residue at position 600 (S600) is a Phosphoserine. The interval 633–641 (FMKEMEGLL) is required for nuclear export.

As to quaternary structure, interacts via the PGR motif with PQBP1 in the nucleus. Interacts with the WW domains of WBP4. Interacts with PPP1CA, PPP1CB and PPP1CC. As to expression, ubiquitously expressed, with highest levels in testis.

Its subcellular location is the nucleus. It localises to the cytoplasm. In terms of biological role, activates pre-mRNA splicing. May inhibit PP1 phosphatase activity. The polypeptide is WW domain-binding protein 11 (Wbp11) (Mus musculus (Mouse)).